A 108-amino-acid chain; its full sequence is MEVKTYAFLQIAVFIFLGMQIFASLTDAADDDNELFTVQYCGMNCTKDEGGTWTGCTGKKEGCKCYHESGKNYGLCLSTEYTDFSQYGNPSDSEIEAAKPKRSDTLSH.

The N-terminal stretch at 1–28 (MEVKTYAFLQIAVFIFLGMQIFASLTDA) is a signal peptide. Cystine bridges form between C41–C63, C45–C65, and C56–C76. A glycan (N-linked (GlcNAc...) asparagine) is linked at N44. Residues 89–108 (NPSDSEIEAAKPKRSDTLSH) form a disordered region. A compositionally biased stretch (basic and acidic residues) spans 96 to 108 (EAAKPKRSDTLSH).

It localises to the secreted. Its function is as follows. Salivary chemokine-binding protein which has chemokine-neutralizing activity and binds to host chemokines CXCL1, CXCL2, CXCL3, CXCL5, CXCL6 and CXCL8. The chain is Evasin P1156 from Ixodes ricinus (Common tick).